The following is a 394-amino-acid chain: Alanine--glyoxylate aminotransferase (394 aa).

Residues 76 to 78, Ser153, and Gln204 each bind pyridoxal 5'-phosphate; that span reads AGH. Ser153 lines the substrate pocket. The residue at position 205 (Lys205) is an N6-(pyridoxal phosphate)lysine. Residues Tyr256 and Thr259 each contribute to the pyridoxal 5'-phosphate site. Arg356 lines the substrate pocket.

This sequence belongs to the class-V pyridoxal-phosphate-dependent aminotransferase family. In terms of assembly, homodimer. Pyridoxal 5'-phosphate is required as a cofactor.

Its subcellular location is the peroxisome. It catalyses the reaction glyoxylate + L-alanine = glycine + pyruvate. The catalysed reaction is (2S)-2-aminobutanoate + glyoxylate = 2-oxobutanoate + glycine. It carries out the reaction glyoxylate + L-phenylalanine = 3-phenylpyruvate + glycine. The enzyme catalyses glyoxylate + L-serine = 3-hydroxypyruvate + glycine. It catalyses the reaction 2-oxobutanoate + L-alanine = (2S)-2-aminobutanoate + pyruvate. The catalysed reaction is L-phenylalanine + pyruvate = 3-phenylpyruvate + L-alanine. It carries out the reaction L-serine + pyruvate = 3-hydroxypyruvate + L-alanine. Functionally, catalyzes the pyridoxal 5'-phosphate-dependent transamination of alanine with glyoxylate as an amino group acceptor. Can also catalyze, although with much less efficiency, the transamination of amino-butyrate, phenylalanine and serine with glyoxylate or pyruvate as an amino group acceptor. Does not catalyze the transamination of both 3-hydroxykynurenine and L-kynurenine. May play a role in the detoxification of glyoxylate, a toxic plant metabolite from the fly diet. The protein is Alanine--glyoxylate aminotransferase of Drosophila melanogaster (Fruit fly).